Reading from the N-terminus, the 429-residue chain is Glucose-1-phosphate adenylyltransferase (429 aa).

Residues glycine 162, 177-178, and serine 209 each bind alpha-D-glucose 1-phosphate; that span reads EK.

It belongs to the bacterial/plant glucose-1-phosphate adenylyltransferase family. In terms of assembly, homotetramer.

It catalyses the reaction alpha-D-glucose 1-phosphate + ATP + H(+) = ADP-alpha-D-glucose + diphosphate. The protein operates within glycan biosynthesis; glycogen biosynthesis. Involved in the biosynthesis of ADP-glucose, a building block required for the elongation reactions to produce glycogen. Catalyzes the reaction between ATP and alpha-D-glucose 1-phosphate (G1P) to produce pyrophosphate and ADP-Glc. The chain is Glucose-1-phosphate adenylyltransferase from Nostoc punctiforme (strain ATCC 29133 / PCC 73102).